The primary structure comprises 370 residues: Nociceptin receptor (370 aa).

Residues 1 to 48 (MESLFPAPFWEVLYGSPLQGNLSLLSPNHSLLPPHLLLNASHGAFLPL) are Extracellular-facing. Residues Asn-21, Asn-28, and Asn-39 are each glycosylated (N-linked (GlcNAc...) asparagine). Residues 49 to 74 (GLKVTIVGLYLAVCVGGLLGNCLVMY) form a helical membrane-spanning segment. At 75–87 (VILRHTKMKTATN) the chain is on the cytoplasmic side. The chain crosses the membrane as a helical span at residues 88–109 (IYIFNLALADTAVLLTLPFQGT). The Extracellular portion of the chain corresponds to 110 to 124 (DVLLGFWPFGNALCK). A disulfide bridge connects residues Cys-123 and Cys-200. A helical transmembrane segment spans residues 125–146 (AVIAIDYYNMFTSAFTLTAMSV). Residues 147 to 165 (DRYVAICHPIRALDVRTSS) lie on the Cytoplasmic side of the membrane. The chain crosses the membrane as a helical span at residues 166-188 (KAQAVNVAIWALASIVGVPVAIM). The Extracellular portion of the chain corresponds to 189–211 (GSAQVEDEEIECLVEIPAPQDYW). The chain crosses the membrane as a helical span at residues 212–236 (GPVFAVCIFLFSFVIPVLIISVCYS). Topologically, residues 237 to 264 (LMVRRLRGVRLLSGSREKDRNLRRITRL) are cytoplasmic. A helical transmembrane segment spans residues 265–285 (VLVVVAVFVGCWTPVQVFVLV). Topologically, residues 286–300 (QGLGVQPGSETAVAV) are extracellular. A helical transmembrane segment spans residues 301–322 (LRFCTALGYVNSCLNPILYAFL). At 323-370 (DENFKACFRKFCCAPTRRREMQVSDRVRSIAKDVALACKTSETVPRPA) the chain is on the cytoplasmic side. A lipid anchor (S-palmitoyl cysteine) is attached at Cys-334.

This sequence belongs to the G-protein coupled receptor 1 family. In terms of processing, phosphorylation at Ser-363 requires GRK3. Detected in brain cortex, stomach, ileum, jejunum and colon.

The protein resides in the cell membrane. Its subcellular location is the cytoplasmic vesicle. G-protein coupled opioid receptor that functions as a receptor for the endogenous neuropeptide nociceptin. Ligand binding causes a conformation change that triggers signaling via guanine nucleotide-binding proteins (G proteins) and modulates the activity of down-stream effectors. Signaling via G proteins mediates inhibition of adenylate cyclase activity and calcium channel activity. Arrestins modulate signaling via G proteins and mediate the activation of alternative signaling pathways that lead to the activation of MAP kinases. Plays a role in modulating nociception and the perception of pain. Plays a role in the regulation of locomotor activity by the neuropeptide nociceptin. The polypeptide is Nociceptin receptor (OPRL1) (Sus scrofa (Pig)).